Here is a 144-residue protein sequence, read N- to C-terminus: D-aminoacyl-tRNA deacylase (144 aa).

A Gly-cisPro motif, important for rejection of L-amino acids motif is present at residues 136-137; that stretch reads GP.

Belongs to the DTD family. In terms of assembly, homodimer.

The protein resides in the cytoplasm. The catalysed reaction is glycyl-tRNA(Ala) + H2O = tRNA(Ala) + glycine + H(+). It catalyses the reaction a D-aminoacyl-tRNA + H2O = a tRNA + a D-alpha-amino acid + H(+). An aminoacyl-tRNA editing enzyme that deacylates mischarged D-aminoacyl-tRNAs. Also deacylates mischarged glycyl-tRNA(Ala), protecting cells against glycine mischarging by AlaRS. Acts via tRNA-based rather than protein-based catalysis; rejects L-amino acids rather than detecting D-amino acids in the active site. By recycling D-aminoacyl-tRNA to D-amino acids and free tRNA molecules, this enzyme counteracts the toxicity associated with the formation of D-aminoacyl-tRNA entities in vivo and helps enforce protein L-homochirality. In Actinobacillus succinogenes (strain ATCC 55618 / DSM 22257 / CCUG 43843 / 130Z), this protein is D-aminoacyl-tRNA deacylase.